We begin with the raw amino-acid sequence, 394 residues long: HORMA domain-containing protein 1 (394 aa).

In terms of domain architecture, HORMA spans 24-226; sequence QQSLVLVKRL…TPFHTFKVKV (203 aa). The segment at 306–394 is disordered; it reads KESPELSISH…RKFSEPKEHI (89 aa). Over residues 311–325 the composition is skewed to polar residues; sequence LSISHSQVEQLVSKT. Over residues 353–362 the composition is skewed to basic and acidic residues; that stretch reads KSKESRKRSQ. Ser-376 bears the Phosphoserine mark. The Nuclear localization signal signature appears at 383–386; sequence KRRK.

In terms of assembly, interacts with HORMAD2. Interacts with IHO1. Phosphorylated at Ser-377 in a SPO11-dependent manner.

It is found in the nucleus. Its subcellular location is the chromosome. Functionally, plays a key role in meiotic progression. Regulates 3 different functions during meiosis: ensures that sufficient numbers of processed DNA double-strand breaks (DSBs) are available for successful homology search by increasing the steady-state numbers of single-stranded DSB ends. Promotes synaptonemal-complex formation independently of its role in homology search. Plays a key role in the male mid-pachytene checkpoint and the female meiotic prophase checkpoint: required for efficient build-up of ATR activity on unsynapsed chromosome regions, a process believed to form the basis of meiotic silencing of unsynapsed chromatin (MSUC) and meiotic prophase quality control in both sexes. The polypeptide is HORMA domain-containing protein 1 (HORMAD1) (Sus scrofa (Pig)).